A 460-amino-acid chain; its full sequence is Inner membrane symporter YicJ (460 aa).

The Periplasmic portion of the chain corresponds to 1–11 (MKSEVLSVKEK). 2 helical membrane passes run 12–32 (IGYGMGDAASHIIFDNVMLYM) and 33–53 (MFFYTDIFGIPAGFVGTMFLV). Over 54 to 80 (ARALDAISDPCMGLLADRTRSRWGKFR) the chain is Periplasmic. Residues 81–101 (PWVLFGALPFGIVCVLAYSTP) traverse the membrane as a helical segment. At 102 to 116 (DLSMNGKMIYAAITY) the chain is on the cytoplasmic side. Residues 117 to 137 (TLLTLLYTVVNIPYCALGGVI) traverse the membrane as a helical segment. At 138 to 152 (TNDPTQRISLQSWRF) the chain is on the periplasmic side. A helical membrane pass occupies residues 153–173 (VLATAGGMLSTVLMMPLVNLI). At 174–181 (GGDNKPLG) the chain is on the cytoplasmic side. Residues 182-202 (FQGGIAVLSVVAFMMLAFCFF) form a helical membrane-spanning segment. The Periplasmic segment spans residues 203–248 (TTKERVEAPPTTTSMREDLRDIWQNDQWRIVGLLTIFNILAVCVRG). The chain crosses the membrane as a helical span at residues 249–269 (GAMMYYVTWILGTPEVFVAFL). Residues 270 to 288 (TTYCVGNLIGSALAKPLTD) lie on the Cytoplasmic side of the membrane. The chain crosses the membrane as a helical span at residues 289–309 (WKCKVTIFWWTNALLAVISLA). Position 310 (Met-310) is a topological domain, periplasmic. The chain crosses the membrane as a helical span at residues 311-331 (FFVPMQASITMFVFIFVIGVL). At 332–366 (HQLVTPIQWVMMSDTVDYGEWCNGKRLTGISFAGT) the chain is on the cytoplasmic side. Residues 367-387 (LFVLKLGLAFGGALIGWMLAY) traverse the membrane as a helical segment. Residues 388 to 403 (GGYDAAEKAQNSATIS) are Periplasmic-facing. A helical membrane pass occupies residues 404–424 (IIIALFTIVPAICYLLSAIIA). Residues 425 to 460 (KRYYSLTTHNLKTVMEQLAQGKRRCQQQFTSQEVQN) are Cytoplasmic-facing.

It belongs to the sodium:galactoside symporter (TC 2.A.2) family.

It is found in the cell inner membrane. The protein is Inner membrane symporter YicJ (yicJ) of Escherichia coli (strain K12).